A 547-amino-acid polypeptide reads, in one-letter code: Probable bifunctional tRNA threonylcarbamoyladenosine biosynthesis protein (547 aa).

Positions 1–329 (MKNTFILGIE…FRTDDVNVTW (329 aa)) are kae1. Fe cation is bound by residues H113, H117, and Y134. Residues 134–138 (YVSGA), D166, G179, E183, and N262 each bind L-threonylcarbamoyladenylate. D290 is a binding site for Fe cation. One can recognise a Protein kinase domain in the interval 340–547 (EISPEAFLRA…EEIKKRARYA (208 aa)). Residues 355–363 (LDNGAEAVI) and K377 each bind ATP. D464 (proton acceptor; for kinase activity) is an active-site residue.

In the N-terminal section; belongs to the KAE1 / TsaD family. This sequence in the C-terminal section; belongs to the protein kinase superfamily. Tyr protein kinase family. BUD32 subfamily. In terms of assembly, component of the KEOPS complex that consists of Kae1, Bud32, Cgi121 and Pcc1; the whole complex dimerizes. Fe(2+) serves as cofactor.

It is found in the cytoplasm. It catalyses the reaction L-seryl-[protein] + ATP = O-phospho-L-seryl-[protein] + ADP + H(+). It carries out the reaction L-threonyl-[protein] + ATP = O-phospho-L-threonyl-[protein] + ADP + H(+). The enzyme catalyses L-threonylcarbamoyladenylate + adenosine(37) in tRNA = N(6)-L-threonylcarbamoyladenosine(37) in tRNA + AMP + H(+). Its function is as follows. Required for the formation of a threonylcarbamoyl group on adenosine at position 37 (t(6)A37) in tRNAs that read codons beginning with adenine. Is a component of the KEOPS complex that is probably involved in the transfer of the threonylcarbamoyl moiety of threonylcarbamoyl-AMP (TC-AMP) to the N6 group of A37. The Kae1 domain likely plays a direct catalytic role in this reaction. The Bud32 domain probably displays kinase activity that regulates Kae1 function. In Methanosarcina acetivorans (strain ATCC 35395 / DSM 2834 / JCM 12185 / C2A), this protein is Probable bifunctional tRNA threonylcarbamoyladenosine biosynthesis protein.